A 286-amino-acid polypeptide reads, in one-letter code: Translocon-associated protein subunit alpha (286 aa).

The N-terminal stretch at 1 to 23 is a signal peptide; it reads MRVLPRLLLLLLLAFPAAVLLRG. The Lumenal portion of the chain corresponds to 24-207; that stretch reads GPGGSLVAAQ…EREDGLDGET (184 aa). The span at 37–75 shows a compositional bias: acidic residues; that stretch reads EDEETVEDSIIEDEDDEAEVEEDEPTDLAEDKEEEDVSG. The tract at residues 37-83 is disordered; the sequence is EDEETVEDSIIEDEDDEAEVEEDEPTDLAEDKEEEDVSGEPEASPSA. Residues Asn-136 and Asn-191 are each glycosylated (N-linked (GlcNAc...) asparagine). The chain crosses the membrane as a helical span at residues 208 to 228; the sequence is IFMYMFLAGLGLLVVVGLHQL. Residues 229-286 are Cytoplasmic-facing; it reads LESRKRKRPIQKVEMGTSSQNDVDMSWIPQETLNQINKASPRRLPRKRAQKRSVGSDE. Ser-247 carries the phosphoserine modification. Thr-260 is subject to Phosphothreonine. Residues 261-286 form a disordered region; the sequence is LNQINKASPRRLPRKRAQKRSVGSDE. Ser-268 carries the post-translational modification Phosphoserine. The span at 268–279 shows a compositional bias: basic residues; the sequence is SPRRLPRKRAQK.

Belongs to the TRAP-alpha family. In terms of assembly, heterotetramer of TRAP-alpha, TRAP-beta, TRAP-delta and TRAP-gamma. Interacts with palmitoylated calnexin (CALX), the interaction is required for efficient folding of glycosylated proteins. In terms of processing, phosphorylated in its cytoplasmic tail.

It is found in the endoplasmic reticulum membrane. TRAP proteins are part of a complex whose function is to bind calcium to the ER membrane and thereby regulate the retention of ER resident proteins. May be involved in the recycling of the translocation apparatus after completion of the translocation process or may function as a membrane-bound chaperone facilitating folding of translocated proteins. This is Translocon-associated protein subunit alpha (SSR1) from Canis lupus familiaris (Dog).